The following is a 465-amino-acid chain: CUGBP Elav-like family member 3 (465 aa).

RRM domains lie at 7–88 (IKLF…PADS) and 95–175 (RKLF…FADT). Residues 346–359 (PPALVAQQPPPPPQ) show a composition bias toward pro residues. The interval 346–379 (PPALVAQQPPPPPQQQQQQQQQQQQQQQREGPDG) is disordered. Residues 360–373 (QQQQQQQQQQQQQQ) are compositionally biased toward low complexity. The region spanning 380-458 (CNIFIYHLPQ…KRLKVQLKRP (79 aa)) is the RRM 3 domain.

It belongs to the CELF/BRUNOL family. Expressed in brain.

The protein resides in the nucleus. It localises to the cytoplasm. RNA-binding protein involved in the regulation of pre-mRNA alternative splicing. Mediates exon inclusion and/or exclusion in pre-mRNA that are subject to tissue-specific and developmentally regulated alternative splicing. Specifically activates exon 5 inclusion of cardiac isoforms of TNNT2 during heart remodeling at the juvenile to adult transition. Activates the splicing of MAPT/Tau exon 10. Binds to muscle-specific splicing enhancer (MSE) intronic sites flanking the alternative exon 5 of TNNT2 pre-mRNA. The chain is CUGBP Elav-like family member 3 (CELF3) from Homo sapiens (Human).